Consider the following 144-residue polypeptide: Large ribosomal subunit protein uL15 (144 aa).

Residues Met1–Gly53 form a disordered region. The span at Arg21–Gly31 shows a compositional bias: gly residues.

It belongs to the universal ribosomal protein uL15 family. Part of the 50S ribosomal subunit.

Binds to the 23S rRNA. The polypeptide is Large ribosomal subunit protein uL15 (Pectobacterium carotovorum subsp. carotovorum (strain PC1)).